We begin with the raw amino-acid sequence, 89 residues long: Small ribosomal subunit protein uS19 (89 aa).

It belongs to the universal ribosomal protein uS19 family.

In terms of biological role, protein S19 forms a complex with S13 that binds strongly to the 16S ribosomal RNA. The sequence is that of Small ribosomal subunit protein uS19 from Vesicomyosocius okutanii subsp. Calyptogena okutanii (strain HA).